Here is a 293-residue protein sequence, read N- to C-terminus: Ribosomal RNA small subunit methyltransferase H (293 aa).

Residues 32–34 (GGH), D51, F78, D99, and Q106 contribute to the S-adenosyl-L-methionine site. A disordered region spans residues 271–293 (PGTEEIRENPPSRSAKLRVAKRI).

Belongs to the methyltransferase superfamily. RsmH family.

The protein localises to the cytoplasm. The enzyme catalyses cytidine(1402) in 16S rRNA + S-adenosyl-L-methionine = N(4)-methylcytidine(1402) in 16S rRNA + S-adenosyl-L-homocysteine + H(+). Functionally, specifically methylates the N4 position of cytidine in position 1402 (C1402) of 16S rRNA. This is Ribosomal RNA small subunit methyltransferase H from Persephonella marina (strain DSM 14350 / EX-H1).